Reading from the N-terminus, the 302-residue chain is Glutaminase (302 aa).

7 residues coordinate substrate: Ser61, Asn111, Glu155, Asn162, Tyr186, Tyr238, and Val256.

It belongs to the glutaminase family. In terms of assembly, homotetramer.

It carries out the reaction L-glutamine + H2O = L-glutamate + NH4(+). The protein is Glutaminase of Pseudomonas fluorescens (strain SBW25).